The sequence spans 239 residues: Ribonuclease PH (239 aa).

Residues Arg86 and 124 to 126 (GTR) each bind phosphate.

This sequence belongs to the RNase PH family. Homohexameric ring arranged as a trimer of dimers.

The enzyme catalyses tRNA(n+1) + phosphate = tRNA(n) + a ribonucleoside 5'-diphosphate. In terms of biological role, phosphorolytic 3'-5' exoribonuclease that plays an important role in tRNA 3'-end maturation. Removes nucleotide residues following the 3'-CCA terminus of tRNAs; can also add nucleotides to the ends of RNA molecules by using nucleoside diphosphates as substrates, but this may not be physiologically important. Probably plays a role in initiation of 16S rRNA degradation (leading to ribosome degradation) during starvation. The sequence is that of Ribonuclease PH from Rhizobium leguminosarum bv. trifolii (strain WSM2304).